A 315-amino-acid chain; its full sequence is MHSYTLHAPAKINLFLEILGDRPDGFHELVMVLQSIALGDKITVRANGTDDIRLSCGDSPLANDATNLAYRAAQLMINNFPQAHDNYGGVDITLTKHIPMAAGLAGGSADAAAVLVGLDLLWNLGLTRPELEQLAAQLGSDIPFCIGGGTAIATGRGEILDPLPDGNCFWVVLAKHRSIEVSTPWAYQTYRQKFGKNYLNDDQSQRARRKTIHAGPLLQGIQHRNPGQIASHIHNDLEKVVLPAHQPVAQLRQVLQSAGGLGTMMSGSGPSVFTLCREQAEAEQVLAIAKEKLNDPDVDFWLTHTIGHGIQIMNN.

Lys-11 is an active-site residue. 99 to 109 (PMAAGLAGGSA) provides a ligand contact to ATP. Asp-141 is a catalytic residue.

Belongs to the GHMP kinase family. IspE subfamily.

The enzyme catalyses 4-CDP-2-C-methyl-D-erythritol + ATP = 4-CDP-2-C-methyl-D-erythritol 2-phosphate + ADP + H(+). It participates in isoprenoid biosynthesis; isopentenyl diphosphate biosynthesis via DXP pathway; isopentenyl diphosphate from 1-deoxy-D-xylulose 5-phosphate: step 3/6. Functionally, catalyzes the phosphorylation of the position 2 hydroxy group of 4-diphosphocytidyl-2C-methyl-D-erythritol. The protein is 4-diphosphocytidyl-2-C-methyl-D-erythritol kinase of Synechocystis sp. (strain ATCC 27184 / PCC 6803 / Kazusa).